The primary structure comprises 255 residues: Enkurin (255 aa).

Over residues 1 to 10 the composition is skewed to polar residues; sequence MDSPCTSESI. Disordered stretches follow at residues 1-25 and 67-96; these read MDSPCTSESIYNLIPSDLKEPPQHP and SKEKTLPPKKKFNRCSPKKPAVPLRTDHPV. Positions 73–83 are enriched in basic residues; it reads PPKKKFNRCSP. The SH3-binding signature appears at 83-89; that stretch reads PKKPAVP. One can recognise an Enkurin domain in the interval 160–252; that stretch reads KRNEDVKKAQ…VIEKHKIIYI (93 aa). The segment at 160–255 is interaction with TRPC proteins; that stretch reads KRNEDVKKAQ…KHKIIYIANK (96 aa). Residues 176 to 187 enclose the IQ domain; the sequence is IQENLKKAAMKR.

As to quaternary structure, microtubule inner protein component of sperm flagellar doublet microtubules. Binds calmodulin via its IQ domain. Interacts with TRPC1, TRPC2, TRPC5, but not TRPC3. Interacts with CFAP45. In terms of tissue distribution, high expression in testis and vomeronasal organ and lower expression in ovary, heart, lung, and brain. Not expressed in other tissues.

It is found in the cytoplasm. The protein resides in the cytoskeleton. It localises to the cilium axoneme. The protein localises to the flagellum axoneme. Its function is as follows. Adapter that functions to localize a calcium-sensitive signal transduction machinery in sperm to a calcium-permeable ion channel. Microtubule inner protein (MIP) part of the dynein-decorated doublet microtubules (DMTs) in cilia axoneme, which is required for motile cilia beating. This chain is Enkurin (Enkur), found in Mus musculus (Mouse).